Here is a 143-residue protein sequence, read N- to C-terminus: EKC/KEOPS complex subunit LAGE3 (143 aa).

The segment at 1–57 (MRDADADAGGGADGGDGRGGHSCRGGVDTAAAPAGGAPPAHAPGPGRDAASAARGSR) is disordered. A compositionally biased stretch (low complexity) spans 30 to 55 (AAAPAGGAPPAHAPGPGRDAASAARG).

Belongs to the CTAG/PCC1 family. In terms of assembly, component of the EKC/KEOPS complex composed of at least GON7, TP53RK, TPRKB, OSGEP and LAGE3; the whole complex dimerizes. In terms of tissue distribution, ubiquitous.

It localises to the cytoplasm. The protein localises to the nucleus. Component of the EKC/KEOPS complex that is required for the formation of a threonylcarbamoyl group on adenosine at position 37 (t(6)A37) in tRNAs that read codons beginning with adenine. The complex is probably involved in the transfer of the threonylcarbamoyl moiety of threonylcarbamoyl-AMP (TC-AMP) to the N6 group of A37. LAGE3 functions as a dimerization module for the complex. In Homo sapiens (Human), this protein is EKC/KEOPS complex subunit LAGE3.